Here is a 254-residue protein sequence, read N- to C-terminus: Probable pectate lyase E (254 aa).

The N-terminal stretch at 1–17 (MLQSLLLLPLFLTSAFA) is a signal peptide. Asparagine 175 carries an N-linked (GlcNAc...) asparagine glycan. A disordered region spans residues 228–254 (NNNGKEPKKKSSGPSKACEYNQPLKKC).

Belongs to the polysaccharide lyase 3 family. The cofactor is Ca(2+).

Its subcellular location is the secreted. The catalysed reaction is Eliminative cleavage of (1-&gt;4)-alpha-D-galacturonan to give oligosaccharides with 4-deoxy-alpha-D-galact-4-enuronosyl groups at their non-reducing ends.. Pectinolytic enzyme consist of four classes of enzymes: pectin lyase, polygalacturonase, pectin methylesterase and rhamnogalacturonase. Among pectinolytic enzymes, pectin lyase is the most important in depolymerization of pectin, since it cleaves internal glycosidic bonds of highly methylated pectins. Favors pectate, the anion, over pectin, the methyl ester. The polypeptide is Probable pectate lyase E (plyE) (Aspergillus clavatus (strain ATCC 1007 / CBS 513.65 / DSM 816 / NCTC 3887 / NRRL 1 / QM 1276 / 107)).